A 163-amino-acid chain; its full sequence is Interleukin-31 (163 aa).

An N-terminal signal peptide occupies residues 1 to 23; sequence MIFHTGTTKPTLVLLCCIGTWLA. 3 N-linked (GlcNAc...) asparagine glycosylation sites follow: N55, N84, and N124.

The protein resides in the secreted. Its function is as follows. Activates STAT3 and possibly STAT1 and STAT5 through the IL31 heterodimeric receptor composed of IL31RA and OSMR. May function in skin immunity. Enhances myeloid progenitor cell survival in vitro. Induces RETNLA and serum amyloid A protein expression in macrophages. The protein is Interleukin-31 (Il31) of Mus musculus (Mouse).